The primary structure comprises 243 residues: Type III pantothenate kinase (243 aa).

Residue 7–14 (DLGNSRFK) participates in ATP binding. Substrate-binding positions include Tyr91 and 98–101 (GVDR). Catalysis depends on Asp100, which acts as the Proton acceptor. An ATP-binding site is contributed by Thr122. Thr172 serves as a coordination point for substrate.

Belongs to the type III pantothenate kinase family. In terms of assembly, homodimer. NH4(+) is required as a cofactor. K(+) serves as cofactor.

The protein resides in the cytoplasm. It carries out the reaction (R)-pantothenate + ATP = (R)-4'-phosphopantothenate + ADP + H(+). It functions in the pathway cofactor biosynthesis; coenzyme A biosynthesis; CoA from (R)-pantothenate: step 1/5. Functionally, catalyzes the phosphorylation of pantothenate (Pan), the first step in CoA biosynthesis. The protein is Type III pantothenate kinase of Stenotrophomonas maltophilia (strain K279a).